A 437-amino-acid chain; its full sequence is Gamma-glutamyl phosphate reductase (437 aa).

Belongs to the gamma-glutamyl phosphate reductase family.

It localises to the cytoplasm. It carries out the reaction L-glutamate 5-semialdehyde + phosphate + NADP(+) = L-glutamyl 5-phosphate + NADPH + H(+). The protein operates within amino-acid biosynthesis; L-proline biosynthesis; L-glutamate 5-semialdehyde from L-glutamate: step 2/2. In terms of biological role, catalyzes the NADPH-dependent reduction of L-glutamate 5-phosphate into L-glutamate 5-semialdehyde and phosphate. The product spontaneously undergoes cyclization to form 1-pyrroline-5-carboxylate. This Synechococcus sp. (strain CC9902) protein is Gamma-glutamyl phosphate reductase.